Here is a 305-residue protein sequence, read N- to C-terminus: Ribonucleoside-diphosphate reductase small subunit (305 aa).

Fe cation contacts are provided by E64, E94, and H97. Y101 is an active-site residue. Residues 150–170 (ILMFLIVEGIYFISSFYSISL) form a helical membrane-spanning segment. Residues E157, E191, and H194 each coordinate Fe cation.

It belongs to the ribonucleoside diphosphate reductase small chain family. Heterotetramer composed of a homodimer of the large subunit (R1) and a homodimer of the small subunit (R2). Larger multisubunit protein complex are also active, composed of (R1)n(R2)n. The cofactor is Fe cation.

The protein localises to the host membrane. It catalyses the reaction a 2'-deoxyribonucleoside 5'-diphosphate + [thioredoxin]-disulfide + H2O = a ribonucleoside 5'-diphosphate + [thioredoxin]-dithiol. Ribonucleoside-diphosphate reductase holoenzyme provides the precursors necessary for viral DNA synthesis. Allows virus growth in non-dividing cells, as well as reactivation from latency in infected hosts. Catalyzes the biosynthesis of deoxyribonucleotides from the corresponding ribonucleotides. This is Ribonucleoside-diphosphate reductase small subunit from Homo sapiens (Human).